Here is a 1169-residue protein sequence, read N- to C-terminus: Chromosome partition protein Smc (1169 aa).

32 to 39 (PNGSGKSN) contacts ATP. A coiled-coil region spans residues 166 to 507 (DEISGIAEFD…RIKALKEMEE (342 aa)). Positions 523-636 (PGIIDIVGNL…ENIDIAKELA (114 aa)) constitute an SMC hinge domain. The stretch at 676 to 1030 (SKLNKIADEI…NKKKEVFMEV (355 aa)) forms a coiled coil.

Belongs to the SMC family. As to quaternary structure, homodimer.

It is found in the cytoplasm. Required for chromosome condensation and partitioning. The sequence is that of Chromosome partition protein Smc from Methanocaldococcus jannaschii (strain ATCC 43067 / DSM 2661 / JAL-1 / JCM 10045 / NBRC 100440) (Methanococcus jannaschii).